The chain runs to 265 residues: 4-hydroxy-tetrahydrodipicolinate reductase (265 aa).

Residues 7 to 12, Asp-33, 96 to 98, and 120 to 123 each bind NAD(+); these read GASGRM, GTT, and AANM. His-153 serves as the catalytic Proton donor/acceptor. Residue His-154 coordinates (S)-2,3,4,5-tetrahydrodipicolinate. Lys-157 acts as the Proton donor in catalysis. A (S)-2,3,4,5-tetrahydrodipicolinate-binding site is contributed by 163–164; the sequence is GT.

It belongs to the DapB family.

It localises to the cytoplasm. It catalyses the reaction (S)-2,3,4,5-tetrahydrodipicolinate + NAD(+) + H2O = (2S,4S)-4-hydroxy-2,3,4,5-tetrahydrodipicolinate + NADH + H(+). The catalysed reaction is (S)-2,3,4,5-tetrahydrodipicolinate + NADP(+) + H2O = (2S,4S)-4-hydroxy-2,3,4,5-tetrahydrodipicolinate + NADPH + H(+). The protein operates within amino-acid biosynthesis; L-lysine biosynthesis via DAP pathway; (S)-tetrahydrodipicolinate from L-aspartate: step 4/4. Its function is as follows. Catalyzes the conversion of 4-hydroxy-tetrahydrodipicolinate (HTPA) to tetrahydrodipicolinate. The protein is 4-hydroxy-tetrahydrodipicolinate reductase of Cupriavidus pinatubonensis (strain JMP 134 / LMG 1197) (Cupriavidus necator (strain JMP 134)).